The following is a 694-amino-acid chain: Glycine--tRNA ligase beta subunit (694 aa).

It belongs to the class-II aminoacyl-tRNA synthetase family. Tetramer of two alpha and two beta subunits.

Its subcellular location is the cytoplasm. It carries out the reaction tRNA(Gly) + glycine + ATP = glycyl-tRNA(Gly) + AMP + diphosphate. The sequence is that of Glycine--tRNA ligase beta subunit from Shewanella denitrificans (strain OS217 / ATCC BAA-1090 / DSM 15013).